The chain runs to 584 residues: Cytochrome c oxidase subunit 1 (584 aa).

The tract at residues 1 to 25 (MTAVAPRVDGHVAPQRPEPTGHARK) is disordered. The chain crosses the membrane as a helical span at residues 43–63 (IMYIIMSFSFFFLGGLMALLI). Position 87 (His-87) interacts with Fe(II)-heme a. Helical transmembrane passes span 90 to 110 (VMLL…VLPL), 122 to 142 (LNAF…TGFL), 171 to 191 (MWIV…INML), 214 to 234 (IFVV…AALG), 259 to 279 (LFWF…FGIV), and 292 to 312 (FGYV…MAVW). Cu cation is bound by residues His-265 and Tyr-269. Residues 265 to 269 (HPEVY) constitute a cross-link (1'-histidyl-3'-tyrosine (His-Tyr)). Positions 314 and 315 each coordinate Cu cation. 2 helical membrane passes run 316–336 (MFVT…LISV) and 360–380 (MIWS…GIML). His-398 serves as a coordination point for heme a3. The next 3 membrane-spanning stretches (helical) occupy residues 399–419 (FHYT…YFWF), 434–454 (IHFW…HWVG), and 477–497 (ISTV…WNVF). His-400 contacts Fe(II)-heme a. Residues 564–584 (HDDINAPELGTAPALASDSSR) form a disordered region.

As to quaternary structure, associates with subunits II, III and IV to form cytochrome c oxidase. The 4 subunit cytochrome c oxidase forms a supercomplex with the menaquinol-cytochrome c reductase complex (cytochrome bc1). Cu(2+) serves as cofactor. Heme is required as a cofactor.

Its subcellular location is the cell membrane. The catalysed reaction is 4 Fe(II)-[cytochrome c] + O2 + 8 H(+)(in) = 4 Fe(III)-[cytochrome c] + 2 H2O + 4 H(+)(out). Its pathway is energy metabolism; oxidative phosphorylation. Functionally, cytochrome c oxidase is the component of the respiratory chain that catalyzes the reduction of oxygen to water. Subunits 1-3 form the functional core of the enzyme complex. CO I is the catalytic subunit of the enzyme. Electrons originating in cytochrome c are transferred via the copper A center of subunit 2 and heme A of subunit 1 to the bimetallic center formed by heme A3 and copper B. This Corynebacterium glutamicum (strain ATCC 13032 / DSM 20300 / JCM 1318 / BCRC 11384 / CCUG 27702 / LMG 3730 / NBRC 12168 / NCIMB 10025 / NRRL B-2784 / 534) protein is Cytochrome c oxidase subunit 1 (ctaD).